The chain runs to 237 residues: E3 ubiquitin-protein ligase RNF166 (237 aa).

The RING-type zinc finger occupies 33–73; the sequence is CPICLEVYHRPVAIGSCGHTFCGECLQPCLQVPSPLCPLCR. Positions 98, 101, 113, and 117 each coordinate Zn(2+). A C2HC RNF-type zinc finger spans residues 98 to 117; sequence CRGCNKKVTLAKMRAHISSC. The UIM domain maps to 221-237; the sequence is DEEAAFQAALALSLSEN.

Its subcellular location is the cytoplasm. It carries out the reaction S-ubiquitinyl-[E2 ubiquitin-conjugating enzyme]-L-cysteine + [acceptor protein]-L-lysine = [E2 ubiquitin-conjugating enzyme]-L-cysteine + N(6)-ubiquitinyl-[acceptor protein]-L-lysine.. Its pathway is protein modification; protein ubiquitination. Its function is as follows. E3 ubiquitin-protein ligase that promotes the ubiquitination of different substrates. In turn, participates in different biological processes including interferon production or autophagy. Plays a role in the activation of RNA virus-induced interferon-beta production by promoting the ubiquitination of TRAF3 and TRAF6. Also plays a role in the early recruitment of autophagy adapters to bacteria. Mediates 'Lys-29' and 'Lys-33'-linked ubiquitination of SQSTM1 leading to xenophagic targeting of bacteria and inhibition of their replication. In Mus musculus (Mouse), this protein is E3 ubiquitin-protein ligase RNF166 (Rnf166).